A 64-amino-acid polypeptide reads, in one-letter code: Hypoxia-inducible lipid droplet-associated protein (64 aa).

Residues 1 to 37 (MKFMLNLYVLGIMLTLLSIFVRVMESLGGLLESPLPG) are required for targeting to lipid droplets. The helical transmembrane segment at 7–24 (LYVLGIMLTLLSIFVRVM) threads the bilayer. Residues 42-51 (TRGQLANTQP) are compositionally biased toward polar residues. The tract at residues 42–64 (TRGQLANTQPPKGLPDHPSRGVQ) is disordered. A compositionally biased stretch (basic and acidic residues) spans 55-64 (LPDHPSRGVQ).

It is found in the lipid droplet. The protein resides in the secreted. It localises to the membrane. Increases intracellular lipid accumulation. Stimulates expression of cytokines including IL6, MIF and VEGFA. Enhances cell growth and proliferation. The chain is Hypoxia-inducible lipid droplet-associated protein (Hilpda) from Mus musculus (Mouse).